Here is a 214-residue protein sequence, read N- to C-terminus: MANKKIPRATAKRLPIYFRYLNVLKDANKQRVSSTELSEAVQVDSATIRRDFSYFGELGKRGYGYDVESLLKFFKGILHQDSLVSVALVGVGSLGSALLNFNFHQDTNLRISAAFDTKPEYANTVKSGIPIYPSEDMVKQLKEQQIDVVILTVPGIKAQHVADQLVEAGVKGILNFTPVRLSVPKNVQVQNIDLTNELQTLIYFIKNYTEDSIK.

A DNA-binding region (H-T-H motif) is located at residues 16–55 (IYFRYLNVLKDANKQRVSSTELSEAVQVDSATIRRDFSYF). 90 to 95 (GVGSLG) serves as a coordination point for NAD(+).

The protein belongs to the transcriptional regulatory Rex family. Homodimer.

It is found in the cytoplasm. In terms of biological role, modulates transcription in response to changes in cellular NADH/NAD(+) redox state. This chain is Redox-sensing transcriptional repressor Rex, found in Limosilactobacillus reuteri (strain DSM 20016) (Lactobacillus reuteri).